Reading from the N-terminus, the 497-residue chain is Glucose-6-phosphate isomerase (497 aa).

The active-site Proton donor is Glu-350. Catalysis depends on residues His-381 and Lys-485.

It belongs to the GPI family.

It localises to the cytoplasm. The enzyme catalyses alpha-D-glucose 6-phosphate = beta-D-fructose 6-phosphate. It participates in carbohydrate biosynthesis; gluconeogenesis. Its pathway is carbohydrate degradation; glycolysis; D-glyceraldehyde 3-phosphate and glycerone phosphate from D-glucose: step 2/4. Functionally, catalyzes the reversible isomerization of glucose-6-phosphate to fructose-6-phosphate. This Legionella pneumophila protein is Glucose-6-phosphate isomerase.